A 549-amino-acid chain; its full sequence is Maturase K (549 aa).

The protein belongs to the intron maturase 2 family. MatK subfamily.

Its subcellular location is the plastid. The protein localises to the chloroplast. Functionally, usually encoded in the trnK tRNA gene intron. Probably assists in splicing its own and other chloroplast group II introns. This chain is Maturase K, found in Albidella oligococca (Caldesia oligococca).